Reading from the N-terminus, the 155-residue chain is Putative pre-16S rRNA nuclease (155 aa).

This sequence belongs to the YqgF nuclease family.

The protein resides in the cytoplasm. In terms of biological role, could be a nuclease involved in processing of the 5'-end of pre-16S rRNA. The chain is Putative pre-16S rRNA nuclease from Xanthomonas oryzae pv. oryzae (strain MAFF 311018).